The sequence spans 66 residues: Large ribosomal subunit protein bL35 (66 aa).

Basic residues predominate over residues 1–26 (MPKMKTHRGAAKRVKRTASGKLKRSR). The disordered stretch occupies residues 1–49 (MPKMKTHRGAAKRVKRTASGKLKRSRAFTSHLFANKSTKQKRKLRKASL).

It belongs to the bacterial ribosomal protein bL35 family.

The polypeptide is Large ribosomal subunit protein bL35 (Staphylococcus carnosus (strain TM300)).